Consider the following 694-residue polypeptide: Elongation factor G (694 aa).

The region spanning 6-288 (KLYRNIGIAA…GVIEYLPSPT (283 aa)) is the tr-type G domain. GTP contacts are provided by residues 15–22 (AHVDAGKT), 86–90 (DTPGH), and 140–143 (NKMD).

This sequence belongs to the TRAFAC class translation factor GTPase superfamily. Classic translation factor GTPase family. EF-G/EF-2 subfamily.

Its subcellular location is the cytoplasm. In terms of biological role, catalyzes the GTP-dependent ribosomal translocation step during translation elongation. During this step, the ribosome changes from the pre-translocational (PRE) to the post-translocational (POST) state as the newly formed A-site-bound peptidyl-tRNA and P-site-bound deacylated tRNA move to the P and E sites, respectively. Catalyzes the coordinated movement of the two tRNA molecules, the mRNA and conformational changes in the ribosome. The sequence is that of Elongation factor G from Legionella pneumophila (strain Lens).